We begin with the raw amino-acid sequence, 327 residues long: Alkanal monooxygenase beta chain (327 aa).

This sequence belongs to the bacterial luciferase oxidoreductase family. In terms of assembly, heterodimer of an alpha and a beta chain.

The catalysed reaction is a long-chain fatty aldehyde + FMNH2 + O2 = a long-chain fatty acid + hnu + FMN + H2O + 2 H(+). In terms of biological role, light-emitting reaction in luminous bacteria. The specific role of the beta subunit is unknown, but it is absolutely required for bioluminescence activity. This chain is Alkanal monooxygenase beta chain (luxB), found in Photorhabdus luminescens (Xenorhabdus luminescens).